Here is a 371-residue protein sequence, read N- to C-terminus: 4-hydroxy-3-methylbut-2-en-1-yl diphosphate synthase (flavodoxin) (371 aa).

[4Fe-4S] cluster is bound by residues C270, C273, C305, and E312.

It belongs to the IspG family. [4Fe-4S] cluster serves as cofactor.

It catalyses the reaction (2E)-4-hydroxy-3-methylbut-2-enyl diphosphate + oxidized [flavodoxin] + H2O + 2 H(+) = 2-C-methyl-D-erythritol 2,4-cyclic diphosphate + reduced [flavodoxin]. It functions in the pathway isoprenoid biosynthesis; isopentenyl diphosphate biosynthesis via DXP pathway; isopentenyl diphosphate from 1-deoxy-D-xylulose 5-phosphate: step 5/6. In terms of biological role, converts 2C-methyl-D-erythritol 2,4-cyclodiphosphate (ME-2,4cPP) into 1-hydroxy-2-methyl-2-(E)-butenyl 4-diphosphate. The sequence is that of 4-hydroxy-3-methylbut-2-en-1-yl diphosphate synthase (flavodoxin) from Shewanella loihica (strain ATCC BAA-1088 / PV-4).